The sequence spans 242 residues: MTLDKLIEKLAAKSSILITPITVKDYLAYKIEPNFLLPFLKALKESEELRFTLLTDLFGADFPQNNVVNSVGLGHKEQGAKPITNRRTTSDNVGESKSIDYKRFEVVYNLLSLKLNKRLIIKVYISEKETIPSAMNIFSAACWYEREVYDMYGVNFEGNDDKRRILTDYEFEGHPLRKDFPLTGYTQVKYDEKLKKVAYEPVDLDIEYREFDFSSHWHSPSYVLPGDEKATDVIPAKAGIQK.

An insert region spans residues 67-101; that stretch reads VVNSVGLGHKEQGAKPITNRRTTSDNVGESKSIDY.

The protein belongs to the complex I 30 kDa subunit family. In terms of assembly, NDH-1 is composed of 14 different subunits. Subunits NuoB, C, D, E, F, and G constitute the peripheral sector of the complex.

It is found in the cell inner membrane. It catalyses the reaction a quinone + NADH + 5 H(+)(in) = a quinol + NAD(+) + 4 H(+)(out). Functionally, NDH-1 shuttles electrons from NADH, via FMN and iron-sulfur (Fe-S) centers, to quinones in the respiratory chain. The immediate electron acceptor for the enzyme in this species is believed to be ubiquinone. Couples the redox reaction to proton translocation (for every two electrons transferred, four hydrogen ions are translocated across the cytoplasmic membrane), and thus conserves the redox energy in a proton gradient. This is NADH-quinone oxidoreductase subunit C from Rickettsia conorii (strain ATCC VR-613 / Malish 7).